The following is a 147-amino-acid chain: MKALVILGFLFLSVAVQGKVFERCELARTLKKLGLDGYKGVSLANWLCLTKWESSYNTKATNYNPSSESTDYGIFQINSKWWCNDGKTPNAVDGCHVSCSELMENDIAKAVACAKHIVSEQGITAWVAWKSHCRDHDVSSYVEGCTL.

An N-terminal signal peptide occupies residues 1 to 18 (MKALVILGFLFLSVAVQG). In terms of domain architecture, C-type lysozyme spans 19 to 147 (KVFERCELAR…VSSYVEGCTL (129 aa)). 4 disulfides stabilise this stretch: cysteine 24–cysteine 145, cysteine 48–cysteine 133, cysteine 83–cysteine 99, and cysteine 95–cysteine 113. Catalysis depends on residues glutamate 53 and aspartate 71.

Belongs to the glycosyl hydrolase 22 family. Monomer. As to expression, stomach-specific.

The enzyme catalyses Hydrolysis of (1-&gt;4)-beta-linkages between N-acetylmuramic acid and N-acetyl-D-glucosamine residues in a peptidoglycan and between N-acetyl-D-glucosamine residues in chitodextrins.. Its function is as follows. Lysozymes have primarily a bacteriolytic function; those in tissues and body fluids are associated with the monocyte-macrophage system and enhance the activity of immunoagents. This Bos taurus (Bovine) protein is Lysozyme C-2 (LYZ2).